A 210-amino-acid chain; its full sequence is Large ribosomal subunit protein uL4 (210 aa).

Residues Gln-41–Lys-52 are compositionally biased toward polar residues. Residues Gln-41–Gly-71 form a disordered region. Positions Gly-60 to Gly-71 are enriched in basic residues.

This sequence belongs to the universal ribosomal protein uL4 family. As to quaternary structure, part of the 50S ribosomal subunit.

One of the primary rRNA binding proteins, this protein initially binds near the 5'-end of the 23S rRNA. It is important during the early stages of 50S assembly. It makes multiple contacts with different domains of the 23S rRNA in the assembled 50S subunit and ribosome. In terms of biological role, forms part of the polypeptide exit tunnel. This is Large ribosomal subunit protein uL4 from Trichormus variabilis (strain ATCC 29413 / PCC 7937) (Anabaena variabilis).